Reading from the N-terminus, the 430-residue chain is MELQSLIDTVSLQKLLLLGALLRLILIAYAFFHDQWFRVKYTDIDYMIVVDGARHMWNGGSPFDRTTFRYTPLLAALVMPSIWIANPMGKLIFASSDLGAAWYCYGVLKSFAKERSAKWMVSLFILFNPIVLSVSTRGNSDMLVTFMSLMVLSKFARRKCYQAAAVLGFAVHFKIYPIIYALPLTLGVWEQSVAASTNTWRRVVKTAVVVSICALMAAISFAVPTVLCYMKYGQQYLNEAFIYHVYREDHRHNFSPYWLLMYLNMARRHLGQGVDFSPRLVAFAPQAVVLSFVSYKLRRNTAHACCVQTVLFVAFNKVCTVQYFVWFIPFLAFLFCEPKEVEDDESGGSGAFKFFSWVKALGVVLMWAATIPLWVTTAVPLEFHGYSDFAQLWIVSCLFFLAMVVLASMLARIAYRVQCTKCSAKSIKVA.

Residues M1–S11 are Cytoplasmic-facing. The chain crosses the membrane as a helical span at residues L12 to F32. Residues H33–P72 are Lumenal-facing. The chain crosses the membrane as a helical span at residues L73 to F93. At A94 to R115 the chain is on the cytoplasmic side. A helical transmembrane segment spans residues S116–T136. Residues R137–A163 are Lumenal-facing. The chain crosses the membrane as a helical span at residues A164–L184. Topologically, residues T185–T206 are cytoplasmic. Residues A207–L227 form a helical membrane-spanning segment. Residues C228 to A360 lie on the Lumenal side of the membrane. A helical membrane pass occupies residues L361–L381. Residues E382–D388 lie on the Cytoplasmic side of the membrane. A helical transmembrane segment spans residues F389–M409. The Lumenal portion of the chain corresponds to L410–A430.

The protein belongs to the PIGM family.

It is found in the endoplasmic reticulum membrane. The protein operates within glycolipid biosynthesis; glycosylphosphatidylinositol-anchor biosynthesis. Mannosyltransferase involved in glycosylphosphatidylinositol-anchor biosynthesis. Transfers the first alpha-1,4-mannose to GlcN-PI during GPI precursor assembly. This chain is GPI mannosyltransferase 1 (PIGM), found in Trypanosoma brucei brucei (strain 927/4 GUTat10.1).